A 393-amino-acid chain; its full sequence is Protein TsgA (393 aa).

Helical transmembrane passes span 11 to 31 (WISFLSYALTGALVIVTGMVM), 51 to 71 (FLNAGILISIFLNAWLMEIIP), 78 to 98 (FGFILMVLAVAGLMFSHSLAL), 101 to 121 (AAMFVLGLVSGITMSIGTFLI), 134 to 154 (LLFTDSFFSMAGMIFPMVAAF), 162 to 182 (WYWVYACIGLVYLAIFILTFG), 206 to 226 (IGVLFLAVAALCYILGQLGFI), 245 to 265 (ALVSDFWMSYMFGMWAFSFIL), 273 to 293 (ILTVLAGMAAVLMYLFITGTQ), 298 to 318 (WFILTLGFFSSAIYTSIITLG), 332 to 352 (FILTCGTIGTMLTFVVTGPIV), and 361 to 381 (LLTANGLYAVVFVMCFALGFV).

It belongs to the major facilitator superfamily. TsgA family.

It is found in the cell inner membrane. The polypeptide is Protein TsgA (Salmonella paratyphi B (strain ATCC BAA-1250 / SPB7)).